A 138-amino-acid chain; its full sequence is Acidic phospholipase A2 RV-7 (138 aa).

Residues 1–16 (MRTLWIVAVCLIGVEG) form the signal peptide. Intrachain disulfides connect Cys-42–Cys-131, Cys-44–Cys-60, Cys-59–Cys-111, Cys-65–Cys-138, Cys-66–Cys-104, Cys-73–Cys-97, and Cys-91–Cys-102. The Ca(2+) site is built by Tyr-43, Gly-45, and Gly-47. His-63 is a catalytic residue. Asp-64 serves as a coordination point for Ca(2+). The active site involves Asp-105.

Belongs to the phospholipase A2 family. Group II subfamily. D49 sub-subfamily. In terms of assembly, heterodimer of a weakly toxic basic protein having phospholipase A2 activity (RV-4) and a non-toxic acidic protein which inhibits its enzymatic activity but potentiates its lethal potency and neurotoxicity (RV-7). It depends on Ca(2+) as a cofactor. In terms of tissue distribution, expressed by the venom gland.

It localises to the secreted. It carries out the reaction a 1,2-diacyl-sn-glycero-3-phosphocholine + H2O = a 1-acyl-sn-glycero-3-phosphocholine + a fatty acid + H(+). Its function is as follows. Heterodimer: RV-4/RV-7 targets the presynaptic sites of the neuromuscular junction. Functionally, monomer: snake venom phospholipase A2 (PLA2) RV-7 that has low enzymatic activity and is not toxic. It inhibits the enzymatic activity of RV-4 in vitro but potentiates its lethal potency and neurotoxicity. It may facilitate the specific binding of RV-4 to its presynaptic binding sites, probably by acting as a chaperone, minimizing distraction and destruction of RV-4 en route to the site of action by reducing non-specific binding to muscle and other organs. PLA2 catalyzes the calcium-dependent hydrolysis of the 2-acyl groups in 3-sn-phosphoglycerides. This is Acidic phospholipase A2 RV-7 from Daboia siamensis (Eastern Russel's viper).